A 62-amino-acid chain; its full sequence is MALSFNQLSLTHFSSLTFLKRLQYILIVSITPLPNKVGSLIIQYFSFTKSNNGRNTSKVNIL.

This is an uncharacterized protein from Homo sapiens (Human).